The primary structure comprises 217 residues: Histone H1-gamma, late (217 aa).

Disordered stretches follow at residues 1–21 and 80–217; these read MSAAKPKVAKKARVAPAHPPS and GKGA…PAKK. Residues 17–91 form the H15 domain; that stretch reads AHPPSSQMVV…GASGSFKLGK (75 aa). Residues 104-113 show a composition bias toward basic residues; it reads IAAKKAKLAA. The segment covering 114–123 has biased composition (basic and acidic residues); sequence KKKEQREKKA. Basic residues predominate over residues 124-217; sequence LKTKARKEKV…AKKAAKPAKK (94 aa).

This sequence belongs to the histone H1/H5 family.

The protein localises to the nucleus. It is found in the chromosome. Histones H1 are necessary for the condensation of nucleosome chains into higher-order structures. The chain is Histone H1-gamma, late from Strongylocentrotus purpuratus (Purple sea urchin).